Reading from the N-terminus, the 196-residue chain is Probable phosphoheptose isomerase (196 aa).

The 154-residue stretch at 43 to 196 (IVNVFNSGGK…MICSVIDSYY (154 aa)) folds into the SIS domain. 58–60 (NGG) contributes to the substrate binding site. Zn(2+) is bound by residues H67 and E71. Residues E71, 100-101 (ND), 126-128 (STS), S131, and Q178 contribute to the substrate site. The Zn(2+) site is built by Q178 and H186.

The protein belongs to the SIS family. GmhA subfamily. Requires Zn(2+) as cofactor.

Its subcellular location is the cytoplasm. The enzyme catalyses 2 D-sedoheptulose 7-phosphate = D-glycero-alpha-D-manno-heptose 7-phosphate + D-glycero-beta-D-manno-heptose 7-phosphate. It functions in the pathway carbohydrate biosynthesis; D-glycero-D-manno-heptose 7-phosphate biosynthesis; D-glycero-alpha-D-manno-heptose 7-phosphate and D-glycero-beta-D-manno-heptose 7-phosphate from sedoheptulose 7-phosphate: step 1/1. Its function is as follows. Catalyzes the isomerization of sedoheptulose 7-phosphate in D-glycero-D-manno-heptose 7-phosphate. This Thermoplasma volcanium (strain ATCC 51530 / DSM 4299 / JCM 9571 / NBRC 15438 / GSS1) protein is Probable phosphoheptose isomerase.